A 453-amino-acid chain; its full sequence is Chromosomal replication initiator protein DnaA (453 aa).

The segment at 1–71 (MSEKEIWEKV…QAILFDVVGY (71 aa)) is domain I, interacts with DnaA modulators. The tract at residues 71–114 (YEVKPHFITTEELANYSNNETATPKETTKPSTETTEDNHVLGRE) is domain II. Residues 115-331 (QFNAHNTFDT…GALTRLLAYS (217 aa)) form a domain III, AAA+ region region. Gly159, Gly161, Lys162, and Thr163 together coordinate ATP. Positions 332-453 (QLLGKPITTE…ENLEKEIRNV (122 aa)) are domain IV, binds dsDNA.

It belongs to the DnaA family. In terms of assembly, oligomerizes as a right-handed, spiral filament on DNA at oriC.

It localises to the cytoplasm. Plays an essential role in the initiation and regulation of chromosomal replication. ATP-DnaA binds to the origin of replication (oriC) to initiate formation of the DNA replication initiation complex once per cell cycle. Binds the DnaA box (a 9 base pair repeat at the origin) and separates the double-stranded (ds)DNA. Forms a right-handed helical filament on oriC DNA; dsDNA binds to the exterior of the filament while single-stranded (ss)DNA is stabiized in the filament's interior. The ATP-DnaA-oriC complex binds and stabilizes one strand of the AT-rich DNA unwinding element (DUE), permitting loading of DNA polymerase. After initiation quickly degrades to an ADP-DnaA complex that is not apt for DNA replication. Binds acidic phospholipids. In Staphylococcus aureus (strain Mu3 / ATCC 700698), this protein is Chromosomal replication initiator protein DnaA.